A 325-amino-acid chain; its full sequence is Acetyl-coenzyme A carboxylase carboxyl transferase subunit alpha (325 aa).

In terms of domain architecture, CoA carboxyltransferase C-terminal spans 35–292 (EIEKLEARLT…DRVLRASLKQ (258 aa)).

It belongs to the AccA family. Acetyl-CoA carboxylase is a heterohexamer composed of biotin carboxyl carrier protein (AccB), biotin carboxylase (AccC) and two subunits each of ACCase subunit alpha (AccA) and ACCase subunit beta (AccD).

The protein resides in the cytoplasm. It catalyses the reaction N(6)-carboxybiotinyl-L-lysyl-[protein] + acetyl-CoA = N(6)-biotinyl-L-lysyl-[protein] + malonyl-CoA. It functions in the pathway lipid metabolism; malonyl-CoA biosynthesis; malonyl-CoA from acetyl-CoA: step 1/1. Its function is as follows. Component of the acetyl coenzyme A carboxylase (ACC) complex. First, biotin carboxylase catalyzes the carboxylation of biotin on its carrier protein (BCCP) and then the CO(2) group is transferred by the carboxyltransferase to acetyl-CoA to form malonyl-CoA. The polypeptide is Acetyl-coenzyme A carboxylase carboxyl transferase subunit alpha (Geobacillus thermodenitrificans (strain NG80-2)).